A 76-amino-acid chain; its full sequence is Acyl carrier protein (76 aa).

One can recognise a Carrier domain in the interval 1 to 76 (MSLEEKVKNI…DVIEYIKAHT (76 aa)). An O-(pantetheine 4'-phosphoryl)serine modification is found at Ser36.

Belongs to the acyl carrier protein (ACP) family. 4'-phosphopantetheine is transferred from CoA to a specific serine of apo-ACP by AcpS. This modification is essential for activity because fatty acids are bound in thioester linkage to the sulfhydryl of the prosthetic group.

It is found in the cytoplasm. It participates in lipid metabolism; fatty acid biosynthesis. In terms of biological role, carrier of the growing fatty acid chain in fatty acid biosynthesis. The protein is Acyl carrier protein of Desulfatibacillum aliphaticivorans.